Reading from the N-terminus, the 38-residue chain is Cytochrome b6-f complex subunit 5 (38 aa).

The helical transmembrane segment at 5 to 25 threads the bilayer; sequence LLCGIVLGLIPVTLLGLFVDA.

The protein belongs to the PetG family. As to quaternary structure, the 4 large subunits of the cytochrome b6-f complex are cytochrome b6, subunit IV (17 kDa polypeptide, PetD), cytochrome f and the Rieske protein, while the 4 small subunits are PetG, PetL, PetM and PetN. The complex functions as a dimer.

The protein resides in the cellular thylakoid membrane. Component of the cytochrome b6-f complex, which mediates electron transfer between photosystem II (PSII) and photosystem I (PSI), cyclic electron flow around PSI, and state transitions. PetG is required for either the stability or assembly of the cytochrome b6-f complex. The chain is Cytochrome b6-f complex subunit 5 from Prochlorococcus marinus (strain MIT 9313).